The following is a 418-amino-acid chain: (+)-T-muurolol synthase ((2E,6E)-farnesyl diphosphate cyclizing) (418 aa).

Mg(2+) contacts are provided by Asp83 and Asp88. The DDXXXD motif signature appears at 83-88; it reads DDEYCD. Residue Arg179 coordinates substrate. Mg(2+)-binding residues include Asn225 and Ser229. Position 232 (Lys232) interacts with substrate. Residue Glu233 coordinates Mg(2+). Residue 312–313 participates in substrate binding; it reads RY. Residues 354–418 are disordered; it reads LPEPGSDGAD…QQSTWRREHR (65 aa). A compositionally biased stretch (polar residues) spans 402–412; it reads ASRSSGLQQST.

The protein belongs to the terpene synthase family. Mg(2+) serves as cofactor.

The enzyme catalyses (2E,6E)-farnesyl diphosphate + H2O = (+)-T-muurolol + diphosphate. It functions in the pathway secondary metabolite biosynthesis; terpenoid biosynthesis. In terms of biological role, catalyzes the conversion of (2E,6E)-farnesyl diphosphate (FPP) into (+)-T-muurolol via a 1,10-cyclization, which requires isomerization of FPP to nerolidyl diphosphate (NPP) and then abstraction of the pyrophosphate from intermediate NPP leading to a (E,Z)-germacradienyl (helminthogermacradienyl) cation. This chain is (+)-T-muurolol synthase ((2E,6E)-farnesyl diphosphate cyclizing), found in Streptomyces clavuligerus.